Here is a 148-residue protein sequence, read N- to C-terminus: Sec-independent protein translocase protein TatB (148 aa).

Residues 1–21 (MFDIGFWELVVIGIVALVVLG) traverse the membrane as a helical segment.

It belongs to the TatB family. In terms of assembly, the Tat system comprises two distinct complexes: a TatABC complex, containing multiple copies of TatA, TatB and TatC subunits, and a separate TatA complex, containing only TatA subunits. Substrates initially bind to the TatABC complex, which probably triggers association of the separate TatA complex to form the active translocon.

The protein resides in the cell inner membrane. Its function is as follows. Part of the twin-arginine translocation (Tat) system that transports large folded proteins containing a characteristic twin-arginine motif in their signal peptide across membranes. Together with TatC, TatB is part of a receptor directly interacting with Tat signal peptides. TatB may form an oligomeric binding site that transiently accommodates folded Tat precursor proteins before their translocation. The sequence is that of Sec-independent protein translocase protein TatB from Aeromonas salmonicida (strain A449).